A 2694-amino-acid chain; its full sequence is Neurobeachin-like protein 1 (2694 aa).

Disordered regions lie at residues 1289–1314 (VLMK…TDEE), 1330–1350 (SLED…DSSV), and 1381–1411 (CEMS…SVHS). Over residues 1290–1314 (LMKDNDKNMSTEDTKKNSDEKTDEE) the composition is skewed to basic and acidic residues. Over residues 1383–1409 (MSDSGSQVPDSLPSTPSPVESTKSFSV) the composition is skewed to polar residues. In terms of domain architecture, BEACH-type PH spans 1883 to 1980 (DQKEKLVLME…VRNKIYSRLL (98 aa)). Residues 1992-2284 (RSPQELFKAS…QLLKEPHPPR (293 aa)) enclose the BEACH domain. WD repeat units lie at residues 2439–2478 (RHMD…GVPV) and 2490–2531 (GHTN…RTLR).

The protein belongs to the WD repeat neurobeachin family. In terms of tissue distribution, highly expressed in brain, kidney, prostate and testis. Weakly expressed in ovary, small intestine, colon and peripheral blood leukocytes. May be correlative to several tumors, such as ovary serous adenocarcinoma and metastasis mammary gland carcinoma breast.

The polypeptide is Neurobeachin-like protein 1 (NBEAL1) (Homo sapiens (Human)).